The chain runs to 210 residues: Putative protein-lysine deacylase ABHD14B (210 aa).

Alanine 2 is modified (N-acetylalanine). At serine 91 the chain carries Phosphoserine. Residues serine 111, aspartate 162, and histidine 188 each act as charge relay system in the active site.

The protein belongs to the AB hydrolase superfamily. ABHD14 family. In terms of assembly, may interact with TAF1. As to expression, ubiquitous. Detected in spleen, thymus, prostate, testis, ovary, small intestine, colon, peripheral blood leukocyte, heart, placenta, lung, liver, skeletal muscle, pancreas and kidney.

The protein resides in the cytoplasm. The protein localises to the nucleus. It catalyses the reaction L-lysyl-[protein] + acetyl-CoA = N(6)-acetyl-L-lysyl-[protein] + CoA + H(+). Functionally, acts as an atypical protein-lysine deacetylase in vitro. Catalyzes the deacetylation of lysine residues using CoA as substrate, generating acetyl-CoA and the free amine of protein-lysine residues. Additional experiments are however required to confirm the protein-lysine deacetylase activity in vivo. Has hydrolase activity towards various surrogate p-nitrophenyl (pNp) substrates, such as pNp-butyrate, pNp-acetate and pNp-octanoate in vitro, with a strong preference for pNp-acetate. May activate transcription. The protein is Putative protein-lysine deacylase ABHD14B of Homo sapiens (Human).